We begin with the raw amino-acid sequence, 219 residues long: Large ribosomal subunit protein uL4c (219 aa).

Residues Arg53–Ala81 form a disordered region. The segment covering Gly68–Gly79 has biased composition (basic residues).

This sequence belongs to the universal ribosomal protein uL4 family. As to quaternary structure, part of the 50S ribosomal subunit.

The protein localises to the plastid. The protein resides in the chloroplast. In terms of biological role, probably binds the 23S rRNA. This chain is Large ribosomal subunit protein uL4c (rpl4), found in Cyanidium caldarium (Red alga).